Here is a 341-residue protein sequence, read N- to C-terminus: D-aspartate oxidase (341 aa).

Residues aspartate 36, arginine 37, threonine 43, serine 44, methionine 50, glycine 307, isoleucine 311, and serine 312 each contribute to the FAD site. Residues 339 to 341 (SKL) carry the Microbody targeting signal motif.

This sequence belongs to the DAMOX/DASOX family. As to quaternary structure, dimer or tetramer. Interacts with PEX5; the interaction is direct and required for localization of DDO to the peroxisome. Requires FAD as cofactor. As to expression, expressed in the small intestine (at protein level). Expressed in the ependymal cell layer of the telencephalic ventricles, hippocampus, thalamus, cerebellum, midbrain region, pons, olfactory bulbs, and cortex. Repressed in the testis. In terms of tissue distribution, expressed in the kidney, liver, stomach, pancreas, uterus, lactating breast, involuting mammary gland, brain, heart, lung, and skin. Expressed in kidney, liver, pancreas, and in the mammary gland regardless of lactation status.

It localises to the peroxisome matrix. The protein localises to the cytoplasm. It is found in the cytosol. The enzyme catalyses D-aspartate + O2 + H2O = oxaloacetate + H2O2 + NH4(+). It carries out the reaction D-glutamate + O2 + H2O = H2O2 + 2-oxoglutarate + NH4(+). Inhibited by the benzodiazepine olanzapine; chronic systemic administration of the benzodiazepine increases levels of D-aspartate and L-glutamate in the prefrontal cortex. Efficiently inhibited by 5-aminonicotinic acid (5-AN) and 1,4-Dihydropyrido[2,3-b]pyrazine-2,3-dione (DPPD). Inhibited by aminooxyacetic acid, thiolactomycin, anthranilic acid, malonate, meso-tartrate and L-tartrate. Benzoate has no effect on activity. In terms of biological role, selectively catalyzes the oxidative deamination of acidic amino acids. Suppresses the level of D-aspartate in the brain, an amino acid that can act as an agonist for glutamate receptors. Protects the organism from the toxicity of D-amino acids. May also function in the intestine. Its function is as follows. Selectively catalyzes the oxidative deamination of acidic amino acids. Does not exhibit D-aspartate oxidase activity. The polypeptide is D-aspartate oxidase (Ddo) (Mus musculus (Mouse)).